We begin with the raw amino-acid sequence, 179 residues long: Large ribosomal subunit protein uL5 (179 aa).

Belongs to the universal ribosomal protein uL5 family. As to quaternary structure, part of the 50S ribosomal subunit; part of the 5S rRNA/L5/L18/L25 subcomplex. Contacts the 5S rRNA and the P site tRNA. Forms a bridge to the 30S subunit in the 70S ribosome.

Its function is as follows. This is one of the proteins that bind and probably mediate the attachment of the 5S RNA into the large ribosomal subunit, where it forms part of the central protuberance. In the 70S ribosome it contacts protein S13 of the 30S subunit (bridge B1b), connecting the 2 subunits; this bridge is implicated in subunit movement. Contacts the P site tRNA; the 5S rRNA and some of its associated proteins might help stabilize positioning of ribosome-bound tRNAs. The polypeptide is Large ribosomal subunit protein uL5 (Dictyoglomus thermophilum (strain ATCC 35947 / DSM 3960 / H-6-12)).